A 320-amino-acid chain; its full sequence is V-set and transmembrane domain-containing protein 4 (320 aa).

An N-terminal signal peptide occupies residues 1 to 23; that stretch reads MRLLALAAAALLARAPAPEVCAA. The Ig-like domain occupies 24-155; sequence LNVTVSPGPV…SSATEMRVIS (132 aa). The Extracellular portion of the chain corresponds to 24 to 180; it reads LNVTVSPGPV…WAFFEDLYVY (157 aa). N-linked (GlcNAc...) asparagine glycosylation is found at asparagine 25, asparagine 41, asparagine 89, and asparagine 144. Cysteine 46 and cysteine 127 form a disulfide bridge. A helical transmembrane segment spans residues 181–201; that stretch reads AVLVCCVGILSILLFMLVIVW. The Cytoplasmic segment spans residues 202–320; sequence QSVFNKRKSR…AQILFEENKL (119 aa).

Post-translationally, proteolytically cleaved to generate a bioactive peptide.

It localises to the secreted. The protein localises to the cell membrane. Functionally, peptide Lv enhances L-type voltage-gated calcium channel (L-VGCC) currents in retinal photoreceptors. This chain is V-set and transmembrane domain-containing protein 4 (VSTM4), found in Homo sapiens (Human).